A 425-amino-acid polypeptide reads, in one-letter code: NAC domain-containing protein 10 (425 aa).

The segment covering 1 to 10 (MESPDSSSGS) has biased composition (polar residues). Residues 1–34 (MESPDSSSGSAPPRVLRRQQQQPGSAPELPPGFR) are disordered. The segment covering 12 to 23 (PPRVLRRQQQQP) has biased composition (low complexity). In terms of domain architecture, NAC spans 29-200 (LPPGFRFHPT…DWVLCRIYKK (172 aa)). Residues 129–206 (VGVKKALVFY…IYKKTNKAGA (78 aa)) mediate DNA binding.

Highest expression in stamens. Expressed in leaves.

The protein localises to the nucleus. In terms of biological role, transcription factor of the NAC family associated with male fertility. Involved in anther development, but not in senescence. Reduced expression of NAC5 via RNAi leads to male-sterility. In Oryza sativa subsp. japonica (Rice), this protein is NAC domain-containing protein 10.